The sequence spans 682 residues: Methionine--tRNA ligase (682 aa).

A 'HIGH' region motif is present at residues 15–25; it reads PYANGAIHLGH. Zn(2+)-binding residues include C146, C149, C159, and C162. The short motif at 331 to 335 is the 'KMSKS' region element; the sequence is KMSKS. Residue K334 coordinates ATP. Residues 580–682 enclose the tRNA-binding domain; the sequence is DLAKLDMRVA…NGVTAGMQVK (103 aa).

This sequence belongs to the class-I aminoacyl-tRNA synthetase family. MetG type 1 subfamily. In terms of assembly, homodimer. The cofactor is Zn(2+).

The protein localises to the cytoplasm. The catalysed reaction is tRNA(Met) + L-methionine + ATP = L-methionyl-tRNA(Met) + AMP + diphosphate. In terms of biological role, is required not only for elongation of protein synthesis but also for the initiation of all mRNA translation through initiator tRNA(fMet) aminoacylation. The chain is Methionine--tRNA ligase from Haemophilus influenzae (strain 86-028NP).